Consider the following 603-residue polypeptide: Mitochondrial distribution and morphology protein 34 (603 aa).

Residues 1–205 form the SMP-LTD domain; the sequence is MAFNFNWSPL…SPEYQEIETE (205 aa). Positions 320-332 are enriched in low complexity; that stretch reads KSGASSVASGSTG. 2 disordered regions span residues 320–511 and 558–603; these read KSGA…PLLR and IARK…AYVA. Positions 333 to 351 are enriched in polar residues; sequence NETLSSRPTLASSYSTSAG. Positions 371–380 are enriched in basic and acidic residues; the sequence is VVDLRRKDGA. The segment covering 383–403 has biased composition (polar residues); that stretch reads GVSTEANTPLPSTQVSDTSSV. The segment covering 452 to 463 has biased composition (low complexity); the sequence is PLLAPAPLIPNA. Positions 500–509 are enriched in polar residues; sequence RQAQQSTSPL. Positions 558–570 are enriched in basic and acidic residues; it reads IARKVQEEKDKSS.

Belongs to the MDM34 family. In terms of assembly, component of the ER-mitochondria encounter structure (ERMES) or MDM complex, composed of mmm1, mdm10, mdm12 and mdm34.

It localises to the mitochondrion outer membrane. In terms of biological role, component of the ERMES/MDM complex, which serves as a molecular tether to connect the endoplasmic reticulum (ER) and mitochondria. Components of this complex are involved in the control of mitochondrial shape and protein biogenesis, and function in nonvesicular lipid trafficking between the ER and mitochondria. Mdm34 is required for the interaction of the ER-resident membrane protein mmm1 and the outer mitochondrial membrane-resident beta-barrel protein mdm10. The sequence is that of Mitochondrial distribution and morphology protein 34 from Pyrenophora tritici-repentis (strain Pt-1C-BFP) (Wheat tan spot fungus).